A 402-amino-acid chain; its full sequence is Putative nickel insertion protein (402 aa).

Belongs to the LarC family.

The sequence is that of Putative nickel insertion protein from Synechococcus elongatus (strain ATCC 33912 / PCC 7942 / FACHB-805) (Anacystis nidulans R2).